The primary structure comprises 1034 residues: Isoleucine--tRNA ligase (1034 aa).

The 'HIGH' region motif lies at 46 to 56 (PYCSGAIHLGT). The 'KMSKS' region motif lies at 598-602 (KMSKS). Lys601 provides a ligand contact to ATP.

This sequence belongs to the class-I aminoacyl-tRNA synthetase family. IleS type 2 subfamily. As to quaternary structure, monomer. It depends on Zn(2+) as a cofactor.

Its subcellular location is the cytoplasm. It catalyses the reaction tRNA(Ile) + L-isoleucine + ATP = L-isoleucyl-tRNA(Ile) + AMP + diphosphate. In terms of biological role, catalyzes the attachment of isoleucine to tRNA(Ile). As IleRS can inadvertently accommodate and process structurally similar amino acids such as valine, to avoid such errors it has two additional distinct tRNA(Ile)-dependent editing activities. One activity is designated as 'pretransfer' editing and involves the hydrolysis of activated Val-AMP. The other activity is designated 'posttransfer' editing and involves deacylation of mischarged Val-tRNA(Ile). The polypeptide is Isoleucine--tRNA ligase (Methanococcus maripaludis (strain DSM 14266 / JCM 13030 / NBRC 101832 / S2 / LL)).